Reading from the N-terminus, the 554-residue chain is Glutamine--tRNA ligase (554 aa).

Positions 34–44 (PEPNGYLHIGH) match the 'HIGH' region motif. ATP contacts are provided by residues 35–37 (EPN) and 41–47 (HIGHAKS). L-glutamine is bound by residues Asp-67 and Tyr-212. ATP-binding positions include Thr-231, 261–262 (RL), and 269–271 (MSK). The 'KMSKS' region signature appears at 268 to 272 (VMSKR). Residues 317–324 (TKQDNTIE) are interaction with tRNA.

This sequence belongs to the class-I aminoacyl-tRNA synthetase family. In terms of assembly, monomer.

The protein localises to the cytoplasm. It catalyses the reaction tRNA(Gln) + L-glutamine + ATP = L-glutaminyl-tRNA(Gln) + AMP + diphosphate. The polypeptide is Glutamine--tRNA ligase (Shigella flexneri serotype 5b (strain 8401)).